The sequence spans 314 residues: Ribosomal RNA small subunit methyltransferase H (314 aa).

Residues 33–35 (GGH), D52, F84, D105, and Q112 contribute to the S-adenosyl-L-methionine site.

This sequence belongs to the methyltransferase superfamily. RsmH family.

It is found in the cytoplasm. It carries out the reaction cytidine(1402) in 16S rRNA + S-adenosyl-L-methionine = N(4)-methylcytidine(1402) in 16S rRNA + S-adenosyl-L-homocysteine + H(+). In terms of biological role, specifically methylates the N4 position of cytidine in position 1402 (C1402) of 16S rRNA. The protein is Ribosomal RNA small subunit methyltransferase H of Lactobacillus delbrueckii subsp. bulgaricus (strain ATCC 11842 / DSM 20081 / BCRC 10696 / JCM 1002 / NBRC 13953 / NCIMB 11778 / NCTC 12712 / WDCM 00102 / Lb 14).